The sequence spans 158 residues: Endoribonuclease YbeY (158 aa).

3 residues coordinate Zn(2+): histidine 118, histidine 122, and histidine 128.

Belongs to the endoribonuclease YbeY family. Zn(2+) is required as a cofactor.

The protein resides in the cytoplasm. Its function is as follows. Single strand-specific metallo-endoribonuclease involved in late-stage 70S ribosome quality control and in maturation of the 3' terminus of the 16S rRNA. The polypeptide is Endoribonuclease YbeY (Bartonella bacilliformis (strain ATCC 35685 / KC583 / Herrer 020/F12,63)).